Consider the following 188-residue polypeptide: Elongation factor P (188 aa).

Belongs to the elongation factor P family.

It is found in the cytoplasm. It participates in protein biosynthesis; polypeptide chain elongation. Its function is as follows. Involved in peptide bond synthesis. Stimulates efficient translation and peptide-bond synthesis on native or reconstituted 70S ribosomes in vitro. Probably functions indirectly by altering the affinity of the ribosome for aminoacyl-tRNA, thus increasing their reactivity as acceptors for peptidyl transferase. This is Elongation factor P from Caulobacter vibrioides (strain ATCC 19089 / CIP 103742 / CB 15) (Caulobacter crescentus).